The following is a 506-amino-acid chain: 2-isopropylmalate synthase (506 aa).

The Pyruvate carboxyltransferase domain maps to 4–266 (ILFMDTTLRD…EPSMTLKEIK (263 aa)). Mn(2+) contacts are provided by aspartate 13, histidine 201, histidine 203, and asparagine 237. The segment at 390-506 (NITQLQVHFV…KLKSFIQLVK (117 aa)) is regulatory domain.

This sequence belongs to the alpha-IPM synthase/homocitrate synthase family. LeuA type 1 subfamily. As to quaternary structure, homodimer. The cofactor is Mn(2+).

The protein localises to the cytoplasm. It catalyses the reaction 3-methyl-2-oxobutanoate + acetyl-CoA + H2O = (2S)-2-isopropylmalate + CoA + H(+). Its pathway is amino-acid biosynthesis; L-leucine biosynthesis; L-leucine from 3-methyl-2-oxobutanoate: step 1/4. In terms of biological role, catalyzes the condensation of the acetyl group of acetyl-CoA with 3-methyl-2-oxobutanoate (2-ketoisovalerate) to form 3-carboxy-3-hydroxy-4-methylpentanoate (2-isopropylmalate). The polypeptide is 2-isopropylmalate synthase (Bacillus cereus (strain AH820)).